A 338-amino-acid polypeptide reads, in one-letter code: Tetraacyldisaccharide 4'-kinase (338 aa).

51–58 provides a ligand contact to ATP; it reads HVGGAGKT.

The protein belongs to the LpxK family.

The enzyme catalyses a lipid A disaccharide + ATP = a lipid IVA + ADP + H(+). It participates in glycolipid biosynthesis; lipid IV(A) biosynthesis; lipid IV(A) from (3R)-3-hydroxytetradecanoyl-[acyl-carrier-protein] and UDP-N-acetyl-alpha-D-glucosamine: step 6/6. Transfers the gamma-phosphate of ATP to the 4'-position of a tetraacyldisaccharide 1-phosphate intermediate (termed DS-1-P) to form tetraacyldisaccharide 1,4'-bis-phosphate (lipid IVA). This chain is Tetraacyldisaccharide 4'-kinase, found in Bradyrhizobium diazoefficiens (strain JCM 10833 / BCRC 13528 / IAM 13628 / NBRC 14792 / USDA 110).